Here is a 265-residue protein sequence, read N- to C-terminus: Arcelin-1 (265 aa).

The signal sequence occupies residues 1 to 21 (MASSNLLTLALFLVLLTHANS). Residues Asn-33, Asn-89, and Asn-128 are each glycosylated (N-linked (GlcNAc...) asparagine). Cys-165 and Cys-201 are disulfide-bonded.

Belongs to the leguminous lectin family. In terms of assembly, homodimer.

In terms of biological role, seed storage. This carbohydrate-binding lectin has toxic effects on an important bean bruchid pest, Z.subfasciatus. Antibiosis properties of legume lectins are proposed to be due to the lysis of epithelial cells of the intestine by binding to the carbohydrate moieties of these proteins. The polypeptide is Arcelin-1 (ARC1) (Phaseolus vulgaris (Kidney bean)).